Here is a 441-residue protein sequence, read N- to C-terminus: Probable cyclic di-GMP phosphodiesterase VC_1348 (441 aa).

Residues 72–187 enclose the Response regulatory domain; the sequence is TILIVDDSPD…LLKSRVHTHL (116 aa). A 4-aspartylphosphate modification is found at Asp120. One can recognise an HD-GYP domain in the interval 214 to 425; it reads LDRMQDAVVF…FIDIAQKFAD (212 aa).

It catalyses the reaction 3',3'-c-di-GMP + 2 H2O = 2 GMP + 2 H(+). In terms of biological role, probable phosphodiesterase (PDE) that catalyzes the hydrolysis of cyclic diguanylate (c-di-GMP). Increases motility and decreases biofilm formation in vivo. In Vibrio cholerae serotype O1 (strain ATCC 39315 / El Tor Inaba N16961), this protein is Probable cyclic di-GMP phosphodiesterase VC_1348.